A 417-amino-acid polypeptide reads, in one-letter code: Tyrosine--tRNA ligase (417 aa).

An L-tyrosine-binding site is contributed by Tyr39. The short motif at Pro44–Gly53 is the 'HIGH' region element. Residues Tyr176 and Gln180 each coordinate L-tyrosine. Residues Lys236 to Ser240 carry the 'KMSKS' region motif. Residue Lys239 participates in ATP binding. Residues Ile350–Ala417 form the S4 RNA-binding domain.

Belongs to the class-I aminoacyl-tRNA synthetase family. TyrS type 1 subfamily. In terms of assembly, homodimer.

The protein resides in the cytoplasm. The catalysed reaction is tRNA(Tyr) + L-tyrosine + ATP = L-tyrosyl-tRNA(Tyr) + AMP + diphosphate + H(+). Its function is as follows. Catalyzes the attachment of tyrosine to tRNA(Tyr) in a two-step reaction: tyrosine is first activated by ATP to form Tyr-AMP and then transferred to the acceptor end of tRNA(Tyr). This Brucella abortus (strain 2308) protein is Tyrosine--tRNA ligase.